The sequence spans 56 residues: Large ribosomal subunit protein bL32 (56 aa).

The disordered stretch occupies residues 1–21; the sequence is MAVQQNRKTRSRRGMRRSHDA. Residues 7-16 show a composition bias toward basic residues; the sequence is RKTRSRRGMR.

It belongs to the bacterial ribosomal protein bL32 family.

The sequence is that of Large ribosomal subunit protein bL32 from Vibrio cholerae serotype O1 (strain ATCC 39541 / Classical Ogawa 395 / O395).